The sequence spans 270 residues: Phosphonoacetaldehyde hydrolase (270 aa).

Aspartate 11 serves as the catalytic Nucleophile. 2 residues coordinate Mg(2+): aspartate 11 and alanine 13. The active-site Schiff-base intermediate with substrate is lysine 53. Position 187 (aspartate 187) interacts with Mg(2+).

This sequence belongs to the HAD-like hydrolase superfamily. PhnX family. In terms of assembly, homodimer. Requires Mg(2+) as cofactor.

It catalyses the reaction phosphonoacetaldehyde + H2O = acetaldehyde + phosphate + H(+). Functionally, involved in phosphonate degradation. The polypeptide is Phosphonoacetaldehyde hydrolase (Salmonella gallinarum (strain 287/91 / NCTC 13346)).